A 151-amino-acid polypeptide reads, in one-letter code: Neuroglobin (151 aa).

The 149-residue stretch at 1-149 (MELPEPELIR…VVQAMSRGWG (149 aa)) folds into the Globin domain. The heme b site is built by His-64 and His-96.

This sequence belongs to the globin family. Monomer. Homodimer and homotetramer; disulfide-linked. Mainly monomeric but also detected as part of homodimers and homotetramers. Interacts with 14-3-3 proteins; regulates the phosphorylation of NGB. Could interact (ferrous form) with G-alpha(i) proteins (GTP-bound form). Phosphorylated during hypoxia by ERK1/ERK2. Phosphorylation regulates the heme pocket hexacoordination preventing the association of His-64 with the heme metal center. Thereby, promotes the access of dioxygen and nitrite to the heme and stimulates the nitrite reductase activity. Phosphorylation during hypoxia is stabilized by 14-3-3 proteins.

The protein localises to the cytoplasm. It localises to the cytosol. Its subcellular location is the mitochondrion matrix. It carries out the reaction Fe(III)-heme b-[protein] + nitric oxide + H2O = Fe(II)-heme b-[protein] + nitrite + 2 H(+). Its function is as follows. Monomeric globin with a bis-histidyl six-coordinate heme-iron atom through which it can bind dioxygen, carbon monoxide and nitric oxide. Could help transport oxygen and increase its availability to the metabolically active neuronal tissues, though its low quantity in tissues as well as its high affinity for dioxygen, which may limit its oxygen-releasing ability, argue against it. The ferrous/deoxygenated form exhibits a nitrite reductase activity and it could produce nitric oxide which in turn inhibits cellular respiration in response to hypoxia. In its ferrous/deoxygenated state, it may also exhibit GDI (Guanine nucleotide Dissociation Inhibitor) activity toward heterotrimeric G-alpha proteins, thereby regulating signal transduction to facilitate neuroprotective responses in the wake of hypoxia and associated oxidative stress. This chain is Neuroglobin, found in Bos taurus (Bovine).